Here is a 432-residue protein sequence, read N- to C-terminus: 3-oxo-tetronate kinase (432 aa).

Residues His-155, Ser-272, Ala-324, Gly-344, Glu-348, 370-373, and Gly-414 contribute to the ATP site; that span reads GGET.

This sequence belongs to the four-carbon acid sugar kinase family.

The enzyme catalyses 3-dehydro-L-erythronate + ATP = 3-dehydro-4-O-phospho-L-erythronate + ADP + H(+). It carries out the reaction 3-dehydro-D-erythronate + ATP = 3-dehydro-4-O-phospho-D-erythronate + ADP + H(+). Functionally, catalyzes the ATP-dependent phosphorylation of 3-oxo-tetronate to 3-oxo-tetronate 4-phosphate. In Cupriavidus necator (strain ATCC 17699 / DSM 428 / KCTC 22496 / NCIMB 10442 / H16 / Stanier 337) (Ralstonia eutropha), this protein is 3-oxo-tetronate kinase.